Here is a 480-residue protein sequence, read N- to C-terminus: Zinc finger protein ztf-6 (480 aa).

Disordered stretches follow at residues cysteine 92–valine 160, glycine 174–aspartate 198, leucine 282–serine 307, and aspartate 328–proline 351. 4 stretches are compositionally biased toward low complexity: residues serine 95–histidine 105, serine 131–valine 145, glycine 174–serine 187, and serine 286–serine 296. 2 consecutive C2H2-type zinc fingers follow at residues tyrosine 359–histidine 383 and phenylalanine 388–histidine 410. The C2H2-type 3; degenerate zinc finger occupies tyrosine 416–cysteine 441. Residues alanine 461–proline 480 are disordered.

Its function is as follows. Probable transcription factor, involved in regulation of dopamine neuron lineage specification. May play a role in maintaining robustness of the Wnt/beta-catenin asymmetry pathway. The chain is Zinc finger protein ztf-6 from Caenorhabditis elegans.